The chain runs to 126 residues: uncharacterized protein (126 aa).

Threonine 68 carries the post-translational modification Phosphothreonine.

This is an uncharacterized protein from Pseudomonas aeruginosa (strain UCBPP-PA14).